The chain runs to 226 residues: Nucleoside triphosphate pyrophosphatase (226 aa).

Residue Asp79 is the Proton acceptor of the active site. Residues 204–226 (WSRGTSTHPTPGTSATPKPNPGA) form a disordered region. Over residues 206–220 (RGTSTHPTPGTSATP) the composition is skewed to polar residues.

It belongs to the Maf family. The cofactor is a divalent metal cation.

The protein resides in the cytoplasm. The catalysed reaction is a ribonucleoside 5'-triphosphate + H2O = a ribonucleoside 5'-phosphate + diphosphate + H(+). It catalyses the reaction a 2'-deoxyribonucleoside 5'-triphosphate + H2O = a 2'-deoxyribonucleoside 5'-phosphate + diphosphate + H(+). Its function is as follows. Nucleoside triphosphate pyrophosphatase. May have a dual role in cell division arrest and in preventing the incorporation of modified nucleotides into cellular nucleic acids. The polypeptide is Nucleoside triphosphate pyrophosphatase (Salinispora tropica (strain ATCC BAA-916 / DSM 44818 / JCM 13857 / NBRC 105044 / CNB-440)).